Consider the following 109-residue polypeptide: Phosphoribosyl-AMP cyclohydrolase (109 aa).

D80 serves as a coordination point for Mg(2+). A Zn(2+)-binding site is contributed by C81. Residues D82 and D84 each contribute to the Mg(2+) site. Residues C97 and C104 each contribute to the Zn(2+) site.

The protein belongs to the PRA-CH family. In terms of assembly, homodimer. It depends on Mg(2+) as a cofactor. Zn(2+) serves as cofactor.

Its subcellular location is the cytoplasm. The catalysed reaction is 1-(5-phospho-beta-D-ribosyl)-5'-AMP + H2O = 1-(5-phospho-beta-D-ribosyl)-5-[(5-phospho-beta-D-ribosylamino)methylideneamino]imidazole-4-carboxamide. It functions in the pathway amino-acid biosynthesis; L-histidine biosynthesis; L-histidine from 5-phospho-alpha-D-ribose 1-diphosphate: step 3/9. In terms of biological role, catalyzes the hydrolysis of the adenine ring of phosphoribosyl-AMP. The sequence is that of Phosphoribosyl-AMP cyclohydrolase from Clostridium beijerinckii (strain ATCC 51743 / NCIMB 8052) (Clostridium acetobutylicum).